The sequence spans 1295 residues: Phosphoribosylformylglycinamidine synthase (1295 aa).

The interval 305-327 (WPGAATGSGGEIRDEGATGRGAK) is disordered. Residues 307-318 (GAATGSGGEIRD), 386-388 (TGY), and alanine 678 each bind ATP. Positions 679, 718, 722, and 884 each coordinate Mg(2+). Serine 886 contributes to the ATP binding site. One can recognise a Glutamine amidotransferase type-1 domain in the interval 1042–1295 (VAVLREQGVN…IFRNARKQLG (254 aa)). Residue cysteine 1135 is the Nucleophile of the active site. Catalysis depends on residues histidine 1260 and glutamate 1262.

In the N-terminal section; belongs to the FGAMS family. In terms of assembly, monomer.

The protein localises to the cytoplasm. It carries out the reaction N(2)-formyl-N(1)-(5-phospho-beta-D-ribosyl)glycinamide + L-glutamine + ATP + H2O = 2-formamido-N(1)-(5-O-phospho-beta-D-ribosyl)acetamidine + L-glutamate + ADP + phosphate + H(+). It participates in purine metabolism; IMP biosynthesis via de novo pathway; 5-amino-1-(5-phospho-D-ribosyl)imidazole from N(2)-formyl-N(1)-(5-phospho-D-ribosyl)glycinamide: step 1/2. Functionally, phosphoribosylformylglycinamidine synthase involved in the purines biosynthetic pathway. Catalyzes the ATP-dependent conversion of formylglycinamide ribonucleotide (FGAR) and glutamine to yield formylglycinamidine ribonucleotide (FGAM) and glutamate. This Salmonella paratyphi A (strain ATCC 9150 / SARB42) protein is Phosphoribosylformylglycinamidine synthase.